Here is a 552-residue protein sequence, read N- to C-terminus: Probable acyl-activating enzyme 5, peroxisomal (552 aa).

The Microbody targeting signal motif lies at 550–552; sequence SRM.

Belongs to the ATP-dependent AMP-binding enzyme family. Expressed in roots, stems and developing seeds.

Its subcellular location is the peroxisome. Functionally, may act as an acid--thiol ligase that activates carboxylic acids by forming acyl-CoAs. The chain is Probable acyl-activating enzyme 5, peroxisomal (AAE5) from Arabidopsis thaliana (Mouse-ear cress).